We begin with the raw amino-acid sequence, 365 residues long: Putative tRNA 2'-phosphotransferase (365 aa).

Disordered regions lie at residues 1 to 35 (MYKN…IRPR) and 231 to 254 (LLDA…PESI). A compositionally biased stretch (low complexity) spans 17 to 27 (SGTPATKSSSK).

Belongs to the KptA/TPT1 family.

The catalysed reaction is 2'-phospho-[ligated tRNA] + NAD(+) = mature tRNA + ADP-alpha-D-ribose 1'',2''-cyclic phosphate + nicotinamide. In terms of biological role, catalyzes the last step of tRNA splicing, the transfer of the splice junction 2'-phosphate from ligated tRNA to NAD to produce ADP-ribose 1''-2'' cyclic phosphate. This chain is Putative tRNA 2'-phosphotransferase, found in Schizosaccharomyces pombe (strain 972 / ATCC 24843) (Fission yeast).